The chain runs to 136 residues: NADPH-dependent 7-cyano-7-deazaguanine reductase (136 aa).

The active-site Thioimide intermediate is C53. The active-site Proton donor is D60. Substrate is bound by residues 75–77 (VEL) and 94–95 (HE).

The protein belongs to the GTP cyclohydrolase I family. QueF type 1 subfamily.

It is found in the cytoplasm. The enzyme catalyses 7-aminomethyl-7-carbaguanine + 2 NADP(+) = 7-cyano-7-deazaguanine + 2 NADPH + 3 H(+). The protein operates within tRNA modification; tRNA-queuosine biosynthesis. Its function is as follows. Catalyzes the NADPH-dependent reduction of 7-cyano-7-deazaguanine (preQ0) to 7-aminomethyl-7-deazaguanine (preQ1). This Trichormus variabilis (strain ATCC 29413 / PCC 7937) (Anabaena variabilis) protein is NADPH-dependent 7-cyano-7-deazaguanine reductase.